We begin with the raw amino-acid sequence, 360 residues long: Homeobox-leucine zipper protein HOX21 (360 aa).

2 disordered regions span residues 25–75 (QQAA…SSAQ) and 88–126 (MLGK…EKKR). Residues 36–55 (HHHHHHHGHHHEQQQHHHHL) show a composition bias toward basic residues. Pro residues predominate over residues 56-68 (GPPPPPPPHPHNP). The segment covering 97–109 (GDGGGGGDEVNGG) has biased composition (gly residues). Residues 121–180 (AGEKKRRLNVEQVRTLEKNFELGNKLEPERKMQLARALGLQPRQVAIWFQNRRARWKTKQ) constitute a DNA-binding region (homeobox). The interval 179 to 223 (KQLEKDYDALKRQLDAVKAENDALLNHNKKLQAEIVALKGREAAS) is leucine-zipper. Disordered stretches follow at residues 233–278 (EASC…GGGG) and 299–328 (GVDI…GNVQ). Residues 234–246 (ASCSNRSENSSEI) are compositionally biased toward polar residues.

This sequence belongs to the HD-ZIP homeobox family. Class I subfamily. Expressed in seedlings, roots, stems, leaf blades and panicles.

Its subcellular location is the nucleus. In terms of biological role, probable transcription factor. In Oryza sativa subsp. indica (Rice), this protein is Homeobox-leucine zipper protein HOX21 (HOX21).